The sequence spans 93 residues: Small ribosomal subunit protein uS19 (93 aa).

Belongs to the universal ribosomal protein uS19 family.

In terms of biological role, protein S19 forms a complex with S13 that binds strongly to the 16S ribosomal RNA. This chain is Small ribosomal subunit protein uS19, found in Mycobacterium tuberculosis (strain ATCC 25177 / H37Ra).